Reading from the N-terminus, the 144-residue chain is Large ribosomal subunit protein uL13 (144 aa).

The protein belongs to the universal ribosomal protein uL13 family. Part of the 50S ribosomal subunit.

Its function is as follows. This protein is one of the early assembly proteins of the 50S ribosomal subunit, although it is not seen to bind rRNA by itself. It is important during the early stages of 50S assembly. The polypeptide is Large ribosomal subunit protein uL13 (Mycoplasmopsis agalactiae (strain NCTC 10123 / CIP 59.7 / PG2) (Mycoplasma agalactiae)).